The following is a 407-amino-acid chain: Imidazolonepropionase (407 aa).

Histidine 68 and histidine 70 together coordinate Fe(3+). 2 residues coordinate Zn(2+): histidine 68 and histidine 70. 4-imidazolone-5-propanoate-binding residues include arginine 77, tyrosine 140, and histidine 173. Tyrosine 140 is a binding site for N-formimidoyl-L-glutamate. Histidine 238 provides a ligand contact to Fe(3+). Histidine 238 is a binding site for Zn(2+). Residue glutamine 241 participates in 4-imidazolone-5-propanoate binding. Position 313 (aspartate 313) interacts with Fe(3+). Aspartate 313 contacts Zn(2+). Asparagine 315 and glycine 317 together coordinate N-formimidoyl-L-glutamate. Threonine 318 serves as a coordination point for 4-imidazolone-5-propanoate.

Belongs to the metallo-dependent hydrolases superfamily. HutI family. Requires Zn(2+) as cofactor. Fe(3+) serves as cofactor.

It localises to the cytoplasm. It catalyses the reaction 4-imidazolone-5-propanoate + H2O = N-formimidoyl-L-glutamate. It participates in amino-acid degradation; L-histidine degradation into L-glutamate; N-formimidoyl-L-glutamate from L-histidine: step 3/3. Its function is as follows. Catalyzes the hydrolytic cleavage of the carbon-nitrogen bond in imidazolone-5-propanoate to yield N-formimidoyl-L-glutamate. It is the third step in the universal histidine degradation pathway. The protein is Imidazolonepropionase of Burkholderia pseudomallei (strain 668).